Reading from the N-terminus, the 354-residue chain is 3-dehydroquinate synthase (354 aa).

Residues G100 to D104, T124 to T125, K136, K145, and F163 to T166 contribute to the NAD(+) site. Zn(2+) is bound by residues E178, H242, and H256.

It belongs to the sugar phosphate cyclases superfamily. Dehydroquinate synthase family. Requires Co(2+) as cofactor. Zn(2+) serves as cofactor. It depends on NAD(+) as a cofactor.

The protein localises to the cytoplasm. It catalyses the reaction 7-phospho-2-dehydro-3-deoxy-D-arabino-heptonate = 3-dehydroquinate + phosphate. It functions in the pathway metabolic intermediate biosynthesis; chorismate biosynthesis; chorismate from D-erythrose 4-phosphate and phosphoenolpyruvate: step 2/7. Its function is as follows. Catalyzes the conversion of 3-deoxy-D-arabino-heptulosonate 7-phosphate (DAHP) to dehydroquinate (DHQ). This chain is 3-dehydroquinate synthase, found in Staphylococcus haemolyticus (strain JCSC1435).